Consider the following 697-residue polypeptide: Testis-specific gene 10 protein (697 aa).

Residues 556–688 (QMTNERISMQ…SPDRGLDRSL (133 aa)) are interaction with HIF1A. Residues 656 to 684 (NAYNLGPMKPNTKCHSPERAHHRSPDRGL) are disordered. Positions 670 to 684 (HSPERAHHRSPDRGL) are enriched in basic and acidic residues. S687 is subject to Phosphoserine.

It belongs to the CEP135/TSGA10 family. As to quaternary structure, interacts with HIF1A. Processed into N-terminal 27-kDa and C-terminal 55-kDa fragments. Predominantly expressed in testis, in spermatozoa (at protein level). Not detected in Leydig cells. The N-terminal 27-kDa fragment is also detected in liver, while the C-terminal 55-kDa fragment is also found retina, brain and kidney (at protein level).

It is found in the cytoplasm. It localises to the cytoskeleton. Its subcellular location is the microtubule organizing center. The protein localises to the centrosome. The protein resides in the centriole. Its function is as follows. Plays a role in spermatogenesis. When overexpressed, prevents nuclear localization of HIF1A. This is Testis-specific gene 10 protein (Tsga10) from Mus musculus (Mouse).